Consider the following 442-residue polypeptide: Proline--tRNA ligase (442 aa).

This sequence belongs to the class-II aminoacyl-tRNA synthetase family. ProS type 2 subfamily. As to quaternary structure, homodimer.

Its subcellular location is the cytoplasm. The catalysed reaction is tRNA(Pro) + L-proline + ATP = L-prolyl-tRNA(Pro) + AMP + diphosphate. Functionally, catalyzes the attachment of proline to tRNA(Pro) in a two-step reaction: proline is first activated by ATP to form Pro-AMP and then transferred to the acceptor end of tRNA(Pro). The polypeptide is Proline--tRNA ligase (Sinorhizobium medicae (strain WSM419) (Ensifer medicae)).